Here is a 306-residue protein sequence, read N- to C-terminus: Oligopeptide transport system permease protein OppB (306 aa).

Residues methionine 1 to alanine 12 lie on the Cytoplasmic side of the membrane. A helical transmembrane segment spans residues isoleucine 13 to alanine 30. Residues proline 31–glycine 101 lie on the Periplasmic side of the membrane. An ABC transmembrane type-1 domain is found at phenylalanine 94–valine 293. A helical membrane pass occupies residues alanine 102–leucine 121. The Cytoplasmic segment spans residues lysine 122–glycine 133. The helical transmembrane segment at phenylalanine 134 to isoleucine 156 threads the bilayer. At threonine 157–glycine 165 the chain is on the periplasmic side. A helical membrane pass occupies residues tryptophan 166–serine 188. Residues isoleucine 189–proline 227 lie on the Cytoplasmic side of the membrane. The chain crosses the membrane as a helical span at residues alanine 228–isoleucine 250. Topologically, residues glutamate 251–serine 277 are periplasmic. A helical membrane pass occupies residues leucine 278–isoleucine 300. Residues aspartate 301–tyrosine 306 lie on the Cytoplasmic side of the membrane.

The protein belongs to the binding-protein-dependent transport system permease family. OppBC subfamily. In terms of assembly, the complex is composed of two ATP-binding proteins (OppD and OppF), two transmembrane proteins (OppB and OppC) and a solute-binding protein (OppA).

It localises to the cell inner membrane. In terms of biological role, part of the ABC transporter complex OppABCDF involved in the uptake of oligopeptides, including the cell wall murein tripeptide L-alanyl-gamma-D-glutamyl-meso-diaminopimelate. Responsible for the translocation of the substrate across the membrane. Plays an important nutritional role and is involved in the recycling of cell wall peptides. The polypeptide is Oligopeptide transport system permease protein OppB (Salmonella typhimurium (strain LT2 / SGSC1412 / ATCC 700720)).